Consider the following 66-residue polypeptide: Disk-determining factor A (66 aa).

Involved in cell-shape determination. Required for the formation of disks. This is Disk-determining factor A from Haloferax volcanii (strain ATCC 29605 / DSM 3757 / JCM 8879 / NBRC 14742 / NCIMB 2012 / VKM B-1768 / DS2) (Halobacterium volcanii).